The chain runs to 194 residues: Inosine triphosphate pyrophosphatase (194 aa).

An ITP-binding site is contributed by 11-16 (TGNAKK). Residue Glu39 coordinates Mg(2+). ITP contacts are provided by residues Lys51, 67–68 (DT), Lys84, 143–146 (FGWD), Lys166, and 171–172 (HR).

This sequence belongs to the HAM1 NTPase family. Homodimer. The cofactor is Mg(2+). It depends on Mn(2+) as a cofactor.

It localises to the cytoplasm. It catalyses the reaction ITP + H2O = IMP + diphosphate + H(+). The catalysed reaction is dITP + H2O = dIMP + diphosphate + H(+). It carries out the reaction XTP + H2O = XMP + diphosphate + H(+). Pyrophosphatase that hydrolyzes non-canonical purine nucleotides such as inosine triphosphate (ITP), deoxyinosine triphosphate (dITP) or xanthosine 5'-triphosphate (XTP) to their respective monophosphate derivatives. The enzyme does not distinguish between the deoxy- and ribose forms. Probably excludes non-canonical purines from RNA and DNA precursor pools, thus preventing their incorporation into RNA and DNA and avoiding chromosomal lesions. This is Inosine triphosphate pyrophosphatase (itpa) from Dictyostelium discoideum (Social amoeba).